The chain runs to 1072 residues: MEQQQSKNNAHVSKLFVCTAVDCKDDIEEKFERSFVTLQMQISGLSDKEMHDMLSQAVCKDKQHEEISIGFLYIMLTDPSMAPKTYRDVTLVSRDGMNGIVTNLTFLVAEKYTKLTEVARRQLIWLLREFVKHQVLSVENVIWNCLRQAGGGDVSSRNLFLIESLLDIFIEFRTWLEGNPFLVQSTVYSFVRLIEDHANPALMSLRQKEVKFTISLIRERFHDIIPLGRDFVRLLQNVARIPEFEQLWRDILFNPKILNQTFNGIWQLLHIRTSRRFLQCRLLPEMERKISFLASSVKFGNQKRYQDWFQEKYFATPESHSLRSDLIRFIINVIHPTNDMLCSDIIPRWAIIGWLISSCTNPIASANAKLSLFYDWLFFDPAKDNIMNIEPGILVMYHSIRNHPFVSSTLLDFLCRITKNFFVKHEDKIRIGVYNSLKLILEKQVIPNLQPLFESPKLDRELRNLIRDNFREFLSPPANLGQLLYPSTHTVQGHILKKESDQRILHCENADLHETGLINISGTVISVVDEDKKISLVPTDQEIESVFSDGTAENLRRVHNIDENTDDDDDLPLSKVRLKEKPRVELADAIAESFESFVSKRNSYTWEAFLKDFRPLPASAFEEFQLNYVISNTVLILRETLPQQNIFSESKTDEKHLAKSISYPLYGLFRFLYENDEKSKKPFQILLSEICERIPEIGYLLLYFMKIYCKLQTRKNSQQSYQFKTTIYRQICDAADEKIANCLLRDLDMLEKENTNIFLWLLPDIYREFKSIATNNTDLLRITLRCIDARNVRDILYSVAQGKLTIFKQDGLIDCIRESLEFETYEQFCLWQIVQAHDVPLRCIQDLLPELEAGSHPEALSHFLLLLKNEEPTNEIIRLMLSREPKSKGDPFVTSALRFWCQRYEEKLSEIIASLLTSKYPSSSPNKRKRPPKGISVSTSIPSADQVLNHLEHYRRSCRHGTGTGLYVHDMMQRALQSAYSHSNDSTKKQFSDLFALAAEEDTTVGRRGGSGRGRKQPGSKKDVNNHGTSKKTAEMVKTIYSSDENSSEEDWSKSKITQTAKRRKKANNDSD.

Disordered regions lie at residues 920–941 (YPSS…STSI) and 1002–1072 (DTTV…NDSD). 4 positions are modified to phosphoserine: Ser1042, Ser1043, Ser1047, and Ser1048.

The protein belongs to the Integrator subunit 3 family. Belongs to the multiprotein complex Integrator, at least composed of IntS1, IntS2, IntS3, IntS4, omd/IntS5, IntS6, defl/IntS7, IntS8, IntS9, IntS10, IntS11, IntS12, asun/IntS13, IntS14 and IntS15. The core complex associates with protein phosphatase 2A subunits mts/PP2A and Pp2A-29B, to form the Integrator-PP2A (INTAC) complex.

Its subcellular location is the nucleus. It localises to the cytoplasm. Component of the integrator complex, a multiprotein complex that terminates RNA polymerase II (Pol II) transcription in the promoter-proximal region of genes. The integrator complex provides a quality checkpoint during transcription elongation by driving premature transcription termination of transcripts that are unfavorably configured for transcriptional elongation: the complex terminates transcription by (1) catalyzing dephosphorylation of the C-terminal domain (CTD) of Pol II subunit Polr2A/Rbp1 and Spt5, and (2) degrading the exiting nascent RNA transcript via endonuclease activity. The integrator complex is also involved in the 3'-end processing of the U7 snRNA, and also the spliceosomal snRNAs U1, U2, U4 and U5. This Drosophila erecta (Fruit fly) protein is Integrator complex subunit 3 homolog (IntS3).